A 166-amino-acid polypeptide reads, in one-letter code: Phosphopantetheine adenylyltransferase (166 aa).

Position 10 (Ser10) interacts with substrate. ATP is bound by residues Ser10–Phe11 and His18. Substrate-binding residues include Lys42, Ala79, and Arg93. Residues Gly94–Arg96, Glu104, and Val129–Thr135 each bind ATP.

This sequence belongs to the bacterial CoaD family. Homohexamer. Mg(2+) is required as a cofactor.

The protein resides in the cytoplasm. It carries out the reaction (R)-4'-phosphopantetheine + ATP + H(+) = 3'-dephospho-CoA + diphosphate. It functions in the pathway cofactor biosynthesis; coenzyme A biosynthesis; CoA from (R)-pantothenate: step 4/5. In terms of biological role, reversibly transfers an adenylyl group from ATP to 4'-phosphopantetheine, yielding dephospho-CoA (dPCoA) and pyrophosphate. In Methylobacterium nodulans (strain LMG 21967 / CNCM I-2342 / ORS 2060), this protein is Phosphopantetheine adenylyltransferase.